Reading from the N-terminus, the 503-residue chain is Maturase K (503 aa).

This sequence belongs to the intron maturase 2 family. MatK subfamily.

It is found in the plastid. It localises to the chloroplast. Usually encoded in the trnK tRNA gene intron. Probably assists in splicing its own and other chloroplast group II introns. In Rosa canina (Dog rose), this protein is Maturase K.